The following is a 483-amino-acid chain: Proton-coupled amino acid transporter 2 (483 aa).

At methionine 1–glutamine 58 the chain is on the cytoplasmic side. Over residues serine 26–threonine 36 the composition is skewed to basic and acidic residues. Residues serine 26–alanine 46 form a disordered region. The chain crosses the membrane as a helical span at residues alanine 59–valine 79. Topologically, residues lysine 80–asparagine 81 are extracellular. Residues alanine 82–methionine 102 form a helical membrane-spanning segment. At histidine 103–histidine 148 the chain is on the cytoplasmic side. A helical transmembrane segment spans residues isoleucine 149–leucine 169. The Extracellular portion of the chain corresponds to alanine 170 to proline 197. Residues threonine 198–isoleucine 218 form a helical membrane-spanning segment. The Cytoplasmic segment spans residues arginine 219–arginine 222. Residues isoleucine 223–isoleucine 243 form a helical membrane-spanning segment. The Extracellular segment spans residues glutamine 244–threonine 264. A helical transmembrane segment spans residues tyrosine 265–leucine 285. The Cytoplasmic segment spans residues glutamate 286 to proline 296. A helical membrane pass occupies residues alanine 297 to glycine 317. Residues tyrosine 318–glycine 349 are Extracellular-facing. The helical transmembrane segment at isoleucine 350–isoleucine 370 threads the bilayer. The Cytoplasmic portion of the chain corresponds to serine 371–leucine 379. The chain crosses the membrane as a helical span at residues proline 380–isoleucine 400. Over proline 401 to aspartate 404 the chain is Extracellular. The helical transmembrane segment at leucine 405–leucine 425 threads the bilayer. Residues leucine 426–serine 437 are Cytoplasmic-facing. The chain crosses the membrane as a helical span at residues proline 438–glycine 458. Residues threonine 459–arginine 483 lie on the Extracellular side of the membrane.

The protein belongs to the amino acid/polyamine transporter 2 family. In terms of tissue distribution, abundantly expressed in kidney and muscle. Expressed in the S1 segment of the proximal tubule close to the glomerulus.

Its subcellular location is the cell membrane. It is found in the endoplasmic reticulum membrane. The protein resides in the recycling endosome membrane. It carries out the reaction glycine(in) + H(+)(in) = glycine(out) + H(+)(out). It catalyses the reaction L-alanine(in) + H(+)(in) = L-alanine(out) + H(+)(out). The enzyme catalyses D-alanine(in) + H(+)(in) = D-alanine(out) + H(+)(out). The catalysed reaction is L-proline(out) + H(+)(out) = L-proline(in) + H(+)(in). It carries out the reaction D-proline(out) + H(+)(out) = D-proline(in) + H(+)(in). It catalyses the reaction 4-hydroxy-L-proline(in) + H(+)(in) = 4-hydroxy-L-proline(out) + H(+)(out). The enzyme catalyses L-serine(in) + H(+)(in) = L-serine(out) + H(+)(out). The catalysed reaction is D-serine(out) + H(+)(out) = D-serine(in) + H(+)(in). It carries out the reaction beta-alanine(in) + H(+)(in) = beta-alanine(out) + H(+)(out). It catalyses the reaction 4-aminobutanoate(in) + H(+)(in) = 4-aminobutanoate(out) + H(+)(out). The enzyme catalyses sarcosine(in) + H(+)(in) = sarcosine(out) + H(+)(out). The catalysed reaction is N,N-dimethylglycine(in) + H(+)(in) = N,N-dimethylglycine(out) + H(+)(out). Its function is as follows. Electrogenic proton/amino acid symporter with a high selectivity for the small side chains amino acids glycine, alanine and proline, where both L- and D-enantiomers are transported. Extension of the backbone length, as in beta-alanine and 4-aminobutanoate or methylation of the amino group, as in sarcosine and N,N-dimethylglycine, are also tolerated but decrease transport efficiency. A free carboxyl group is preferred. The protein is Proton-coupled amino acid transporter 2 of Homo sapiens (Human).